We begin with the raw amino-acid sequence, 304 residues long: Glutamyl-Q tRNA(Asp) synthetase (304 aa).

L-glutamate contacts are provided by residues 14-18 (RFAPS) and E50. A 'HIGH' region motif is present at residues 17 to 27 (PSPSGPLHFGS). Residues C106, C108, Y120, and C124 each contribute to the Zn(2+) site. The L-glutamate site is built by Y178 and R196. The 'KMSKS' region motif lies at 234–238 (KLSKQ). K237 provides a ligand contact to ATP.

Belongs to the class-I aminoacyl-tRNA synthetase family. GluQ subfamily. Zn(2+) is required as a cofactor.

Catalyzes the tRNA-independent activation of glutamate in presence of ATP and the subsequent transfer of glutamate onto a tRNA(Asp). Glutamate is transferred on the 2-amino-5-(4,5-dihydroxy-2-cyclopenten-1-yl) moiety of the queuosine in the wobble position of the QUC anticodon. The protein is Glutamyl-Q tRNA(Asp) synthetase of Vibrio cholerae serotype O1 (strain ATCC 39315 / El Tor Inaba N16961).